We begin with the raw amino-acid sequence, 90 residues long: Protein S100-A6 (90 aa).

2 EF-hand domains span residues 12-47 and 48-83; these read LVAI…IGSK and LQDA…LALI. T28 and E33 together coordinate Ca(2+). At K40 the chain carries N6-acetyllysine. S46 carries the phosphoserine modification. K47 carries the post-translational modification N6-acetyllysine; alternate. Position 47 is an N6-succinyllysine; alternate (K47). Ca(2+)-binding residues include D61, N63, D65, E67, and E72.

This sequence belongs to the S-100 family. In terms of assembly, homodimer; head to tail assembly of 2 subunits. Interacts with CACYBP in a calcium-dependent manner. Interacts with ANXA2 and ANXA11 (via N-terminus). Interacts with SUGT1. Interacts with TP53; has higher affinity for TP53 that is phosphorylated on its N-terminal domain, and lower affinity for TP53 that is phosphorylated on its C-terminal domain. Interacts with tropomyosin. Interacts with FKBP4. Interacts with PPP5C (via TPR repeats); the interaction is calcium-dependent and modulates PPP5C activity. Interacts with TPPP; this interaction inhibits TPPP dimerization. Post-translationally, the N-terminus is blocked.

It localises to the nucleus envelope. The protein localises to the cytoplasm. The protein resides in the cell membrane. Functionally, may function as calcium sensor and modulator, contributing to cellular calcium signaling. May function by interacting with other proteins, such as TPR-containing proteins, and indirectly play a role in many physiological processes such as the reorganization of the actin cytoskeleton and in cell motility. Binds 2 calcium ions. Calcium binding is cooperative. The protein is Protein S100-A6 (S100A6) of Homo sapiens (Human).